The following is a 310-amino-acid chain: Probable manganese-dependent inorganic pyrophosphatase (310 aa).

Mn(2+) is bound by residues His-10, Asp-14, Asp-16, Asp-75, His-97, and Asp-149.

It belongs to the PPase class C family. Mn(2+) serves as cofactor.

The protein resides in the cytoplasm. The enzyme catalyses diphosphate + H2O = 2 phosphate + H(+). This Clostridium acetobutylicum (strain ATCC 824 / DSM 792 / JCM 1419 / IAM 19013 / LMG 5710 / NBRC 13948 / NRRL B-527 / VKM B-1787 / 2291 / W) protein is Probable manganese-dependent inorganic pyrophosphatase.